We begin with the raw amino-acid sequence, 619 residues long: MEIVYVYVKKRSEFGKQCNFSDRQAELNIDISPNPELAALYVERNPVDTGIQCSASMSEHEANTERFEMENCGVNHVEGGWPKDVNPQELEQTIRFRKKVEKDENYINAVMQLGSIMEHCIKQNNAIDIYEEYFDDEEAVEVTEEAPSAKTINVFRDPQEIKRTATHLSWHPDGNKKLAVAYSCLQFQRSPMGMSHDSYIWDLENPNRPEIALKPSSPLITLEYNPKDSHVLLGGCYNGQIACWDTRKGSLVAELSTIEFSHRDPVYGTIWLQSKTGTECFSASTDGQVMWWDIRKISEPTEVVIMDITRKEQLENALGAISLEFESTLPTKFMVGTEQGIVISCNRKAKTPAEKIVCTFSGHHGPIYALQRNPFYPKNFLTVGDWAARIWSEESRESSIMWTRYHMAYLSDGAWSPVRPAVFFTTKMDGTLDIWDLVFKQCDPALSLKVCDDPLFCLRVQDTGCLIACGSELGTTTLLEVSSSLSTLQRNERNIASSIFERETRREKILEARHREMRLKEKGKAEGRDDDQKEEETALDLDELVNKAEEEFFEVIFAELKRKEAEALKKKPKPKKASIEVEGEDELEDIAGEEEESGIIMGEDTGEDDMDEKNEGGAP.

WD repeat units lie at residues 214-254, 261-302, 362-401, 405-445, and 450-489; these read KPSS…LVAE, SHRD…EPTE, GHHGPIYALQRNPFYPKNFLTVGDWAARIWSEESRESSIM, YHMA…CDPA, and VCDDPLFCLRVQDTGCLIACGSELGTTTLLEVSSSLSTLQ. The interval 566 to 619 is disordered; the sequence is EALKKKPKPKKASIEVEGEDELEDIAGEEEESGIIMGEDTGEDDMDEKNEGGAP. Residues 581-597 show a composition bias toward acidic residues; sequence VEGEDELEDIAGEEEES.

This sequence belongs to the dynein intermediate chain family. Consists of at least two heavy chains and a number of intermediate and light chains. Interacts with DNAAF2. Interacts with DNAAF6/PIH1D3. Interacts with HEATR2; probably involved in outer arm dynein assembly. Interacts with CFAP53.

Its subcellular location is the cytoplasm. It is found in the cytoskeleton. The protein resides in the cilium axoneme. It localises to the dynein axonemal particle. Functionally, part of the dynein complex of respiratory cilia. This Rattus norvegicus (Rat) protein is Dynein axonemal intermediate chain 2 (Dnai2).